We begin with the raw amino-acid sequence, 662 residues long: Protein distal antenna (662 aa).

In terms of domain architecture, HTH psq-type spans 21–72 (TKGKRPLRHLTATDKIDAIQRIHDGESKASVARDIGVPESTLRGWCKNEEKL). Residues 48–68 (KASVARDIGVPESTLRGWCKN) constitute a DNA-binding region (H-T-H motif). 4 disordered regions span residues 265-299 (RNAR…STPS), 348-407 (YSQM…PEDT), 491-537 (PEDL…DDEV), and 558-596 (QSSP…KSTC). Positions 349–391 (SQMPRPSSPQQPQSTPPTTTTTQQQQPQSSTPPTATPPIVSTP) are enriched in low complexity. Over residues 511–520 (FNPSPSTSIK) the composition is skewed to polar residues. Residues 527 to 536 (VDEDEDEDDE) are compositionally biased toward acidic residues.

As to quaternary structure, homomers. Interacts with itself, danr, ey and dac to form a complex (or complexes) containing the RD factors.

The protein localises to the nucleus. Probable transcription factor with a role in the retinal determination (RD) network. Contributes to differentiation of antenna-specific characteristics. This Culex quinquefasciatus (Southern house mosquito) protein is Protein distal antenna.